The chain runs to 290 residues: Probable aquaporin PIP2-7 (290 aa).

The next 2 helical transmembrane spans lie at 45 to 65 and 79 to 99; these read ALIA…ATVI and GVGY…LVYC. The NPA 1 signature appears at 109–111; the sequence is NPA. 3 helical membrane passes run 128-148, 168-188, and 202-222; these read VLYV…VKGI, SAAG…YTVF, and IPVL…LATI. An NPA 2 motif is present at residues 230–232; that stretch reads NPA. The helical transmembrane segment at 252–272 threads the bilayer; it reads IFWVGPVIGAFLAAAYHKLVL.

This sequence belongs to the MIP/aquaporin (TC 1.A.8) family. PIP (TC 1.A.8.11) subfamily. In terms of tissue distribution, expressed in roots.

The protein resides in the cell membrane. Its function is as follows. Aquaporins facilitate the transport of water and small neutral solutes across cell membranes. In Oryza sativa subsp. japonica (Rice), this protein is Probable aquaporin PIP2-7 (PIP2-7).